A 1074-amino-acid chain; its full sequence is Semaphorin-5A (1074 aa).

Residues 1 to 22 (MKGTCVIAWLFSSLGLWRLAHP) form the signal peptide. Over 23–968 (EAQGTTQCQR…EEKRCGEFNM (946 aa)) the chain is Extracellular. Residues 35-484 (HPVISYKEIG…LREHVVKIPL (450 aa)) enclose the Sema domain. Intrachain disulfides connect cysteine 104-cysteine 114 and cysteine 131-cysteine 140. Asparagine 142, asparagine 168, asparagine 227, and asparagine 277 each carry an N-linked (GlcNAc...) asparagine glycan. 2 disulfide bridges follow: cysteine 254/cysteine 357 and cysteine 278/cysteine 320. Asparagine 323, asparagine 367, and asparagine 437 each carry an N-linked (GlcNAc...) asparagine glycan. Cystine bridges form between cysteine 487/cysteine 504 and cysteine 496/cysteine 513. 2 N-linked (GlcNAc...) asparagine glycosylation sites follow: asparagine 536 and asparagine 591. TSP type-1 domains lie at 540-593 (DGHF…ANCS), 595-651 (NGGW…LLCP), 653-702 (HMFW…NPCP), 707-765 (TTPW…GCST), 784-839 (NGAW…LPCP), 841-896 (DGVW…QPCP), and 897-944 (ESWS…VFDS). 6 disulfides stabilise this stretch: cysteine 607–cysteine 644, cysteine 611–cysteine 650, cysteine 622–cysteine 634, cysteine 665–cysteine 696, cysteine 669–cysteine 701, and cysteine 680–cysteine 686. The N-linked (GlcNAc...) asparagine glycan is linked to asparagine 717. 6 disulfide bridges follow: cysteine 796–cysteine 833, cysteine 800–cysteine 838, cysteine 811–cysteine 823, cysteine 853–cysteine 890, cysteine 857–cysteine 895, and cysteine 868–cysteine 880. A glycan (N-linked (GlcNAc...) asparagine) is linked at asparagine 933. The chain crosses the membrane as a helical span at residues 969 to 989 (FHMIAVGLSSSILGCLLTLLV). At 990–1074 (YTYCQRYQQQ…FTDLNNYDEY (85 aa)) the chain is on the cytoplasmic side.

The protein belongs to the semaphorin family. In terms of assembly, binds PLXNB3.

It is found in the membrane. Its function is as follows. Bifunctional axonal guidance cue regulated by sulfated proteoglycans; attractive effects result from interactions with heparan sulfate proteoglycans (HSPGs), while the inhibitory effects depend on interactions with chondroitin sulfate proteoglycans (CSPGs). Ligand for receptor PLXNB3. In glioma cells, SEMA5A stimulation of PLXNB3 results in the disassembly of F-actin stress fibers, disruption of focal adhesions and cellular collapse as well as inhibition of cell migration and invasion through ARHGDIA-mediated inactivation of RAC1. May promote angiogenesis by increasing endothelial cell proliferation and migration and inhibiting apoptosis. In Homo sapiens (Human), this protein is Semaphorin-5A (SEMA5A).